The primary structure comprises 629 residues: Phosphomethylpyrimidine synthase (629 aa).

The span at 1–13 (MTTKSKNAINLSD) shows a compositional bias: polar residues. Positions 1 to 22 (MTTKSKNAINLSDSAKVDEQSV) are disordered. Residues N233, M262, Y291, H327, 347–349 (SRG), 388–391 (DGLR), and E427 contribute to the substrate site. Residue H431 coordinates Zn(2+). Y454 serves as a coordination point for substrate. H495 is a Zn(2+) binding site. C575, C578, and C583 together coordinate [4Fe-4S] cluster.

The protein belongs to the ThiC family. As to quaternary structure, homodimer. Requires [4Fe-4S] cluster as cofactor.

The enzyme catalyses 5-amino-1-(5-phospho-beta-D-ribosyl)imidazole + S-adenosyl-L-methionine = 4-amino-2-methyl-5-(phosphooxymethyl)pyrimidine + CO + 5'-deoxyadenosine + formate + L-methionine + 3 H(+). It participates in cofactor biosynthesis; thiamine diphosphate biosynthesis. Catalyzes the synthesis of the hydroxymethylpyrimidine phosphate (HMP-P) moiety of thiamine from aminoimidazole ribotide (AIR) in a radical S-adenosyl-L-methionine (SAM)-dependent reaction. This is Phosphomethylpyrimidine synthase from Pseudomonas fluorescens (strain Pf0-1).